Here is an 83-residue protein sequence, read N- to C-terminus: Cytochrome b559 subunit alpha (83 aa).

The chain crosses the membrane as a helical span at residues 21–35 (VIHSITIPSLFIAGW). His23 contacts heme.

Belongs to the PsbE/PsbF family. As to quaternary structure, heterodimer of an alpha subunit and a beta subunit. PSII is composed of 1 copy each of membrane proteins PsbA, PsbB, PsbC, PsbD, PsbE, PsbF, PsbH, PsbI, PsbJ, PsbK, PsbL, PsbM, PsbT, PsbX, PsbY, PsbZ, Psb30/Ycf12, at least 3 peripheral proteins of the oxygen-evolving complex and a large number of cofactors. It forms dimeric complexes. It depends on heme b as a cofactor.

The protein localises to the plastid. The protein resides in the chloroplast thylakoid membrane. Functionally, this b-type cytochrome is tightly associated with the reaction center of photosystem II (PSII). PSII is a light-driven water:plastoquinone oxidoreductase that uses light energy to abstract electrons from H(2)O, generating O(2) and a proton gradient subsequently used for ATP formation. It consists of a core antenna complex that captures photons, and an electron transfer chain that converts photonic excitation into a charge separation. The chain is Cytochrome b559 subunit alpha from Physcomitrium patens (Spreading-leaved earth moss).